Here is a 281-residue protein sequence, read N- to C-terminus: Shikimate dehydrogenase (NADP(+)) (281 aa).

Shikimate contacts are provided by residues 20 to 22 (SRS) and threonine 67. Catalysis depends on lysine 71, which acts as the Proton acceptor. NADP(+) is bound at residue aspartate 83. The shikimate site is built by asparagine 92 and aspartate 108. NADP(+) is bound by residues 133-137 (GAGGA), 157-162 (NRTEAR), and methionine 225. Position 227 (tyrosine 227) interacts with shikimate. Glycine 248 lines the NADP(+) pocket.

The protein belongs to the shikimate dehydrogenase family. Homodimer.

It catalyses the reaction shikimate + NADP(+) = 3-dehydroshikimate + NADPH + H(+). It participates in metabolic intermediate biosynthesis; chorismate biosynthesis; chorismate from D-erythrose 4-phosphate and phosphoenolpyruvate: step 4/7. Its function is as follows. Involved in the biosynthesis of the chorismate, which leads to the biosynthesis of aromatic amino acids. Catalyzes the reversible NADPH linked reduction of 3-dehydroshikimate (DHSA) to yield shikimate (SA). The chain is Shikimate dehydrogenase (NADP(+)) from Paracidovorax citrulli (strain AAC00-1) (Acidovorax citrulli).